The chain runs to 286 residues: Foldase protein PrsA 1 (286 aa).

Residues 1 to 18 (MKKAMLALAATSVIALSA) form the signal peptide. Residue C19 is the site of N-palmitoyl cysteine attachment. C19 carries S-diacylglycerol cysteine lipidation. Residues 130-220 (KPEIKASHIL…FGYHIIKVTD (91 aa)) enclose the PpiC domain.

This sequence belongs to the PrsA family.

The protein resides in the cell membrane. The catalysed reaction is [protein]-peptidylproline (omega=180) = [protein]-peptidylproline (omega=0). Plays a major role in protein secretion by helping the post-translocational extracellular folding of several secreted proteins. The polypeptide is Foldase protein PrsA 1 (prsA1) (Bacillus cereus (strain ATCC 14579 / DSM 31 / CCUG 7414 / JCM 2152 / NBRC 15305 / NCIMB 9373 / NCTC 2599 / NRRL B-3711)).